The primary structure comprises 512 residues: 2-isopropylmalate synthase (512 aa).

In terms of domain architecture, Pyruvate carboxyltransferase spans 4-266 (IQFFDTTLRD…ETNIVLNQFK (263 aa)). Residues D13, H201, H203, and N237 each contribute to the Mn(2+) site. The interval 390–512 (ELKHLQVQYV…SKQADFEEVK (123 aa)) is regulatory domain.

This sequence belongs to the alpha-IPM synthase/homocitrate synthase family. LeuA type 1 subfamily. In terms of assembly, homodimer. It depends on Mn(2+) as a cofactor.

The protein localises to the cytoplasm. The enzyme catalyses 3-methyl-2-oxobutanoate + acetyl-CoA + H2O = (2S)-2-isopropylmalate + CoA + H(+). The protein operates within amino-acid biosynthesis; L-leucine biosynthesis; L-leucine from 3-methyl-2-oxobutanoate: step 1/4. Functionally, catalyzes the condensation of the acetyl group of acetyl-CoA with 3-methyl-2-oxobutanoate (2-ketoisovalerate) to form 3-carboxy-3-hydroxy-4-methylpentanoate (2-isopropylmalate). The sequence is that of 2-isopropylmalate synthase from Listeria innocua serovar 6a (strain ATCC BAA-680 / CLIP 11262).